A 547-amino-acid polypeptide reads, in one-letter code: Mercuric reductase (547 aa).

Residues 4–67 (NSYKIPIQGM…NISAAGYQPG (64 aa)) form the HMA domain. 2 residues coordinate a metal cation: Cys15 and Cys18. 3 residues coordinate FAD: Ala97, Gly117, and Thr122. Cys123 and Cys128 form a disulfide bridge. FAD-binding residues include Lys132, Ala196, Asp388, and Val396. Hg(2+) contacts are provided by Cys544 and Cys545.

It belongs to the class-I pyridine nucleotide-disulfide oxidoreductase family. Homodimer. The cofactor is FAD.

It carries out the reaction Hg + NADP(+) + H(+) = Hg(2+) + NADPH. Its function is as follows. Resistance to Hg(2+) in bacteria appears to be governed by a specialized system which includes mercuric reductase. MerA protein is responsible for volatilizing mercury as Hg(0). The chain is Mercuric reductase (merA) from Staphylococcus aureus.